Consider the following 238-residue polypeptide: Cysteine-rich venom protein natrin-2 (238 aa).

The signal sequence occupies residues 1-19 (MIAFIVLLSLAAVLQQSSG). Residues 38–164 (VDKHNALRRS…SSKYLYVCQY (127 aa)) enclose the SCP domain. Disulfide bonds link C75–C153, C92–C165, C148–C162, C184–C191, C187–C196, C200–C233, C209–C227, and C218–C231. The ShKT domain maps to 200–233 (CKHHNVFSNCQSLAKQNACQTEWMKSKCAASCFC).

Expressed by the venom gland.

Its subcellular location is the secreted. Its function is as follows. Inhibits carbachol-induced muscle contraction and weakly blocks muscle contraction evoked by potassium. The polypeptide is Cysteine-rich venom protein natrin-2 (Naja atra (Chinese cobra)).